A 247-amino-acid polypeptide reads, in one-letter code: Probable transcriptional regulatory protein Gbem_3313 (247 aa).

Belongs to the TACO1 family.

The protein localises to the cytoplasm. The chain is Probable transcriptional regulatory protein Gbem_3313 from Citrifermentans bemidjiense (strain ATCC BAA-1014 / DSM 16622 / JCM 12645 / Bem) (Geobacter bemidjiensis).